The primary structure comprises 249 residues: MAGHSHWAQIKHKKAKVDAQKGKLFGKLIREITVATKLGGPDPNANPRLRIAIEAARKVSMPMDTIEKAIKRGTGNDKEGALEEIVYEGYGPGGTAIMVVVATDNRNKATSEVRHAFSKHGGNLGSSGCVSYLFEQKGVIEIPKEATDEEKLMEAALEAGADDVESTEDMFIVYTNPKDVYTIKDILASKGFTIESAKTSLIPTTTVEIKDVDTAKKLLNLLEHLDELDEVQEVISNFEIDKDILAALG.

This sequence belongs to the TACO1 family.

It is found in the cytoplasm. The polypeptide is Probable transcriptional regulatory protein HY04AAS1_0501 (Hydrogenobaculum sp. (strain Y04AAS1)).